A 595-amino-acid chain; its full sequence is Sucrose transport protein SUT4 (595 aa).

Residues 1–61 (MDSAAGGGGL…PAARTTTTRK (61 aa)) are Cytoplasmic-facing. The disordered stretch occupies residues 29-55 (SLNGGTPRGGSPKDPDATHQQGPPAAR). The chain crosses the membrane as a helical span at residues 62–82 (LVLACMVAAGVQFGWALQLSL). Residues 83-97 (LTPYIQTLGIDHAMA) lie on the Extracellular side of the membrane. A helical membrane pass occupies residues 98-118 (SFIWLCGPITGFVVQPCVGVW). Residues 119-130 (SDKCRSKYGRRR) are Cytoplasmic-facing. A helical transmembrane segment spans residues 131 to 151 (PFILAGCLMICFAVTLIGFSA). Residues 152–173 (DLGYILGDTTEHCSTYKGSRFR) are Extracellular-facing. The chain crosses the membrane as a helical span at residues 174-194 (AAIIFVLGFWMLDLANNTVQG). Residues 195-213 (PARALLADLSGPDQCNSAN) lie on the Cytoplasmic side of the membrane. The chain crosses the membrane as a helical span at residues 214–234 (AIFCTWMAVGNVLGFSSGASG). At 235–256 (NWHKWFPFLMTRACCEACSNLK) the chain is on the extracellular side. A helical transmembrane segment spans residues 257–277 (AAFLVAVVFLLFCMSVTLYFA). The Cytoplasmic segment spans residues 278–365 (EEIPLEPTDA…LTSMRHLPPG (88 aa)). The tract at residues 291 to 340 (SDSAPLLNGSRDDNNASNEPRNGALPNGHTDGSNVPANSNAEDSNSNREN) is disordered. Polar residues predominate over residues 320 to 334 (TDGSNVPANSNAEDS). The helical transmembrane segment at 366–386 (MYSVLLVMALTWLSWFPFFLF) threads the bilayer. Residues 387–417 (DTDWMGREVYHGDPNGNLSERKAYDNGVREG) are Extracellular-facing. An N-linked (GlcNAc...) asparagine glycan is attached at Asn-403. The chain crosses the membrane as a helical span at residues 418 to 438 (AFGLLLNSVVLGIGSFLVDPL). Residues 439 to 447 (CRLMGARLV) lie on the Cytoplasmic side of the membrane. The chain crosses the membrane as a helical span at residues 448–468 (WAISNFTVFICMLATAILSWI). Residues 469–491 (SFDLYSSKLHHIIGANKTVKNSA) are Extracellular-facing. N-linked (GlcNAc...) asparagine glycosylation occurs at Asn-484. The helical transmembrane segment at 492–512 (LIVFSLLGLPLSITYSVPFSV) threads the bilayer. Over 513 to 525 (TAELTAGTGGGQG) the chain is Cytoplasmic. A helical membrane pass occupies residues 526–546 (LATGVLNLAIVVPQIVVSLGA). Topologically, residues 547-556 (GPWDALFGGG) are extracellular. The chain crosses the membrane as a helical span at residues 557 to 577 (NVPAFALASVFSLGAGVLAVL). Over 578–595 (KLPKLPNSYRSAGFHGFG) the chain is Cytoplasmic.

The protein belongs to the glycoside-pentoside-hexuronide (GPH) cation symporter transporter (TC 2.A.2.4) family. In terms of assembly, homodimer.

The protein resides in the cell membrane. It participates in glycan biosynthesis; sucrose metabolism. Functionally, responsible for the transport of sucrose into the cell, with the concomitant uptake of protons (symport system). May also transport other glucosides. The polypeptide is Sucrose transport protein SUT4 (SUT4) (Oryza sativa subsp. indica (Rice)).